Here is a 387-residue protein sequence, read N- to C-terminus: Phosphoglycerate kinase (387 aa).

Residues 21–23 (DLN), Arg36, 59–62 (HLGR), Arg113, and Arg146 contribute to the substrate site. ATP contacts are provided by residues Lys197, Glu314, and 340 to 343 (GGDT).

Belongs to the phosphoglycerate kinase family. As to quaternary structure, monomer.

It localises to the cytoplasm. It catalyses the reaction (2R)-3-phosphoglycerate + ATP = (2R)-3-phospho-glyceroyl phosphate + ADP. It participates in carbohydrate degradation; glycolysis; pyruvate from D-glyceraldehyde 3-phosphate: step 2/5. The polypeptide is Phosphoglycerate kinase (Pectobacterium atrosepticum (strain SCRI 1043 / ATCC BAA-672) (Erwinia carotovora subsp. atroseptica)).